Here is a 273-residue protein sequence, read N- to C-terminus: Ribosomal RNA small subunit methyltransferase A (273 aa).

Residues Asn25, Leu27, Gly52, Glu73, Asp99, and Asn118 each contribute to the S-adenosyl-L-methionine site.

This sequence belongs to the class I-like SAM-binding methyltransferase superfamily. rRNA adenine N(6)-methyltransferase family. RsmA subfamily.

It localises to the cytoplasm. It catalyses the reaction adenosine(1518)/adenosine(1519) in 16S rRNA + 4 S-adenosyl-L-methionine = N(6)-dimethyladenosine(1518)/N(6)-dimethyladenosine(1519) in 16S rRNA + 4 S-adenosyl-L-homocysteine + 4 H(+). Its function is as follows. Specifically dimethylates two adjacent adenosines (A1518 and A1519) in the loop of a conserved hairpin near the 3'-end of 16S rRNA in the 30S particle. May play a critical role in biogenesis of 30S subunits. In Novosphingobium aromaticivorans (strain ATCC 700278 / DSM 12444 / CCUG 56034 / CIP 105152 / NBRC 16084 / F199), this protein is Ribosomal RNA small subunit methyltransferase A.